Consider the following 186-residue polypeptide: Akirin-1A (186 aa).

A disordered region spans residues 14-65 (EALMSPQSPKRRRCAPLPGSPATPSPQRCAIRPEMQQGQQQPLSQLGGDRRL). The segment covering 49–60 (QQGQQQPLSQLG) has biased composition (low complexity). The SYVS motif motif lies at 183–186 (SYVS).

The protein belongs to the akirin family.

It localises to the nucleus. Molecular adapter that acts as a bridge between proteins, and which is involved skeletal muscle development. Functions as a signal transducer for MSTN during skeletal muscle regeneration and myogenesis. This Xenopus laevis (African clawed frog) protein is Akirin-1A (akirin1-a).